Consider the following 147-residue polypeptide: Hemoglobin subunit gamma-1 (147 aa).

A Globin domain is found at 3–147 (NFTAEDKAAI…VASALGSRYH (145 aa)). A Phosphothreonine modification is found at T13. A phosphoserine mark is found at S45, S51, and S53. K60 bears the N6-acetyllysine mark. H64 contributes to the heme b binding site. K83 is subject to N6-acetyllysine. H93 contributes to the heme b binding site. Residue C94 is modified to S-nitrosocysteine. Position 140 is a phosphoserine (S140).

The protein belongs to the globin family. In terms of assembly, heterotetramer of two alpha chains and two gamma chains in fetal hemoglobin (Hb F). In terms of tissue distribution, red blood cells.

Functionally, gamma chains make up the fetal hemoglobin F, in combination with alpha chains. The polypeptide is Hemoglobin subunit gamma-1 (HBG1) (Plecturocebus moloch (Dusky titi monkey)).